Consider the following 189-residue polypeptide: dTTP/UTP pyrophosphatase (189 aa).

Aspartate 73 serves as the catalytic Proton acceptor.

It belongs to the Maf family. YhdE subfamily. A divalent metal cation is required as a cofactor.

The protein localises to the cytoplasm. It catalyses the reaction dTTP + H2O = dTMP + diphosphate + H(+). The enzyme catalyses UTP + H2O = UMP + diphosphate + H(+). Its function is as follows. Nucleoside triphosphate pyrophosphatase that hydrolyzes dTTP and UTP. May have a dual role in cell division arrest and in preventing the incorporation of modified nucleotides into cellular nucleic acids. The polypeptide is dTTP/UTP pyrophosphatase (Vibrio parahaemolyticus serotype O3:K6 (strain RIMD 2210633)).